Consider the following 218-residue polypeptide: uncharacterized protein (218 aa).

Residues 154–199 (CFICTMEYSRTDKNLHPIILNCGHNLCRSCINKLTGNGIVKCPFDR) form an RING-type zinc finger.

This is an uncharacterized protein from Caenorhabditis elegans.